We begin with the raw amino-acid sequence, 1188 residues long: Oxysterol-binding protein homolog 1 (1188 aa).

ANK repeat units follow at residues 51–80 (VLHLMLHYAVQVAPMAVIKEIVHHWVSTTN), 96–125 (NGNTPLHIAAYQSRGDIVAFLLDQPTINDC), and 196–225 (TGDTVLHEFVKKRDVIMCRWLLEHGADPFK). The PH domain maps to 330-379 (MSSCSLHLDSSEKLKFEIIGGNNGVIRWHLKGNHPIETNRWVWAIQGAIR). Serine 394 bears the Phosphoserine mark. Disordered regions lie at residues 415-546 (ATSK…GDED) and 661-692 (QKKLNNQPQVETEANEESDDANSMIKGSQEST). A compositionally biased stretch (polar residues) spans 424–433 (PHLSKSTLTQ). The span at 443–462 (TNNNNNKSNNDYDDNNNNNN) shows a compositional bias: low complexity. The span at 463–473 (NDDDDYDDDDE) shows a compositional bias: acidic residues. 2 positions are modified to phosphoserine: serine 490 and serine 500. Residues 514–529 (PSDDEGYSEDDSDDDG) show a composition bias toward acidic residues. A phosphoserine mark is found at serine 678, serine 683, and serine 691. Residues threonine 692 and threonine 694 each carry the phosphothreonine modification. A phosphoserine mark is found at serine 708 and serine 712. Residues 716–722 (EFFDAEE) carry the FFAT motif. Residues 721-755 (EEAASDKKANDSEDLTTNKETPANAKPQEEAPEDE) are disordered. The segment at 800-1174 (LWSVLKSMVG…YWKFNGEYWN (375 aa)) is OSBP-related domain (ORD). Positions 834 and 962 each coordinate ergosterol.

It belongs to the OSBP family. Interacts with NVJ1. Interacts with the AAA ATPase AFG2; regulates OSH1 membrane association. AFG2 is required for membrane dissociation of OSH1. Interacts with SCS2.

The protein resides in the golgi apparatus membrane. The protein localises to the nucleus outer membrane. It localises to the endoplasmic reticulum membrane. Its subcellular location is the vacuole membrane. Its function is as follows. Lipid transport protein (LTP) involved in non-vesicular transfer of lipids between membranes. Functions in phosphoinositide-coupled directional transport of various lipids by carrying the lipid molecule in a hydrophobic pocket and transferring it between membranes through the cytosol. Involved in maintenance of intracellular sterol distribution and homeostasis. Involved in non-vesicular transport of ergosterol and PI(4)P at the NVJ. Binds sterol and PI4P in a mutually exclusive manner. May be involved in formation of PMN vesicles by altering the membrane lipid composition. This chain is Oxysterol-binding protein homolog 1, found in Saccharomyces cerevisiae (strain ATCC 204508 / S288c) (Baker's yeast).